Consider the following 20-residue polypeptide: Small ribosomal subunit protein bS20 (20 aa).

Residues 1-20 are disordered; it reads ANNPGARKAIRKIEARTEVN. Residues 11-20 show a composition bias toward basic and acidic residues; it reads RKIEARTEVN.

This sequence belongs to the bacterial ribosomal protein bS20 family.

Its function is as follows. Binds directly to 16S ribosomal RNA. This Brevundimonas vesicularis (Pseudomonas vesicularis) protein is Small ribosomal subunit protein bS20 (rpsT).